Consider the following 405-residue polypeptide: Glutathione S-transferase LANCL1 (405 aa).

Residue Cys282 participates in Zn(2+) binding. Lys323 lines the glutathione pocket. Positions 328 and 329 each coordinate Zn(2+). 370–373 contacts glutathione; it reads RTPD.

It belongs to the LanC-like protein family.

The protein resides in the cytoplasm. It localises to the cell membrane. It catalyses the reaction RX + glutathione = an S-substituted glutathione + a halide anion + H(+). It carries out the reaction 1-chloro-2,4-dinitrobenzene + glutathione = 2,4-dinitrophenyl-S-glutathione + chloride + H(+). In terms of biological role, functions as a glutathione transferase. Catalyzes conjugation of the glutathione (GSH) to artificial substrates 1-chloro-2,4-dinitrobenzene (CDNB) and p-nitrophenyl acetate. Binds glutathione. This is Glutathione S-transferase LANCL1 from Danio rerio (Zebrafish).